The primary structure comprises 314 residues: Probable cell division protein WhiA (314 aa).

The segment at residues 274–308 (SLKELGEMMSTGKISKSGVNHRLRKLNEMADKLRS) is a DNA-binding region (H-T-H motif).

Belongs to the WhiA family.

In terms of biological role, involved in cell division and chromosome segregation. The polypeptide is Probable cell division protein WhiA (Staphylococcus saprophyticus subsp. saprophyticus (strain ATCC 15305 / DSM 20229 / NCIMB 8711 / NCTC 7292 / S-41)).